The primary structure comprises 85 residues: Three-finger toxin MALT0044C (85 aa).

Residues 1–21 (MKTLLLTLVVVTIVCLDLGNT) form the signal peptide. 4 disulfides stabilise this stretch: cysteine 24–cysteine 45, cysteine 38–cysteine 63, cysteine 67–cysteine 78, and cysteine 79–cysteine 84.

The protein belongs to the three-finger toxin family. Short-chain subfamily. Expressed by the venom gland.

It is found in the secreted. This is Three-finger toxin MALT0044C from Micrurus altirostris (Uruguayan coral snake).